The sequence spans 612 residues: MVSFSSCLRALALGSSVLAVQPVLRQATGLDTWLSTEANFSRQAILNNIGADGQSAQGASPGVVIASPSKSDPDYFYTWTRDSGLVMKTLVDLFRGGDADLLPIIEEFISSQARIQGISNPSGALSSGGLGEPKFNVDETAFTGAWGRPQRDGPALRATAMISFGEWLVENGHTSIATDLVWPVVRNDLSYVAQYWSQSGFDLWEEVQGTSFFTVAVSHRALVEGSSFAKTVGSSCPYCDSQAPQVRCYLQSFWTGSYIQANFGGGRSGKDINTVLGSIHTFDPQATCDDATFQPCSARALANHKVVTDSFRSIYAINSGRAENQAVAVGRYPEDSYYNGNPWFLTTLAAAEQLYDALYQWDKIGSLAITDVSLPFFKALYSSAATGTYASSTTVYKDIVSAVKAYADGYVQIVQTYAASTGSMAEQYTKTDGSQTSARDLTWSYAALLTANNRRNAVVPAPWGETAATSIPSACSTTSASGTYSSVVITSWPTISGYPGAPDSPCQVPTTVSVTFAVKATTVYGESIKIVGSISQLGSWNPSSATALNADSYTTDNPLWTGTINLPAGQSFEYKFIRVQNGAVTWESDPNRKYTVPSTCGVKSAVQSDVWR.

An N-terminal signal peptide occupies residues 1-19 (MVSFSSCLRALALGSSVLA). Positions 20-25 (VQPVLR) are excised as a propeptide. A glycan (N-linked (GlcNAc...) asparagine) is linked at Asn39. Position 146 (Trp146) interacts with substrate. Asp202 acts as the Proton acceptor in catalysis. Glu205 functions as the Proton donor in the catalytic mechanism. Disulfide bonds link Cys236–Cys239, Cys248–Cys475, and Cys288–Cys296. The region spanning 506–612 (CQVPTTVSVT…KSAVQSDVWR (107 aa)) is the CBM20 domain.

Belongs to the glycosyl hydrolase 15 family.

The catalysed reaction is Hydrolysis of terminal (1-&gt;4)-linked alpha-D-glucose residues successively from non-reducing ends of the chains with release of beta-D-glucose.. The chain is Glucoamylase (glaA) from Aspergillus oryzae (strain ATCC 42149 / RIB 40) (Yellow koji mold).